Consider the following 170-residue polypeptide: Ribosome maturation factor RimM (170 aa).

A PRC barrel domain is found at 98 to 170 (EGQYYWADLE…RIELDWDPDF (73 aa)).

Belongs to the RimM family. As to quaternary structure, binds ribosomal protein uS19.

The protein localises to the cytoplasm. Functionally, an accessory protein needed during the final step in the assembly of 30S ribosomal subunit, possibly for assembly of the head region. Essential for efficient processing of 16S rRNA. May be needed both before and after RbfA during the maturation of 16S rRNA. It has affinity for free ribosomal 30S subunits but not for 70S ribosomes. The protein is Ribosome maturation factor RimM of Alkalilimnicola ehrlichii (strain ATCC BAA-1101 / DSM 17681 / MLHE-1).